Consider the following 152-residue polypeptide: Troponin C (152 aa).

Threonine 1 bears the N-acetylthreonine mark. EF-hand domains are found at residues 9–44 (KQIL…LGLL), 45–80 (VKDD…KLKE), 82–117 (LDER…LGDE), and 118–152 (LTEE…SSDA). Aspartate 131, aspartate 133, serine 135, threonine 137, and glutamate 142 together coordinate Ca(2+).

It belongs to the troponin C family.

In terms of biological role, troponin is the central regulatory protein of striated muscle contraction. Tn consists of three components: Tn-I which is the inhibitor of actomyosin ATPase, Tn-T which contains the binding site for tropomyosin and Tn-C. The binding of calcium to Tn-C abolishes the inhibitory action of Tn on actin filaments. In Mizuhopecten yessoensis (Japanese scallop), this protein is Troponin C.